Here is a 511-residue protein sequence, read N- to C-terminus: Lysine--tRNA ligase (511 aa).

2 residues coordinate Mg(2+): E421 and E428.

It belongs to the class-II aminoacyl-tRNA synthetase family. As to quaternary structure, homodimer. Mg(2+) is required as a cofactor.

It localises to the cytoplasm. The catalysed reaction is tRNA(Lys) + L-lysine + ATP = L-lysyl-tRNA(Lys) + AMP + diphosphate. The chain is Lysine--tRNA ligase from Herminiimonas arsenicoxydans.